A 314-amino-acid polypeptide reads, in one-letter code: Splicing factor YJU2 (314 aa).

Positions 43, 46, 80, and 83 each coordinate Zn(2+). 2 disordered regions span residues 178-238 (MSQE…NEVP) and 253-314 (LAGL…DSDS). Positions 200 to 209 (EEARHRRLLE) are enriched in basic and acidic residues. A phosphoserine mark is found at S211, S213, and S220. Positions 222 to 232 (PRAAARPNPTA) are enriched in low complexity. Residues 290 to 302 (PTPQTPGTSSLSQ) are compositionally biased toward polar residues. S309, S312, and S314 each carry phosphoserine.

It belongs to the CWC16 family. YJU2 subfamily. Component of the spliceosome. Present in the activated B complex, the catalytically activated B* complex which catalyzes the branching, the catalytic step 1 C complex catalyzing the exon ligation, and the postcatalytic P complex containing the ligated exons (mRNA) and the excised lariat intron.

Its subcellular location is the nucleus. In terms of biological role, part of the spliceosome which catalyzes two sequential transesterification reactions, first the excision of the non-coding intron from pre-mRNA and then the ligation of the coding exons to form the mature mRNA. Plays a role in stabilizing the structure of the spliceosome catalytic core and docking of the branch helix into the active site, producing 5'-exon and lariat intron-3'-intermediates. May protect cells from TP53-dependent apoptosis upon dsDNA break damage through association with PRP19-CD5L complex. The chain is Splicing factor YJU2 from Mus musculus (Mouse).